The chain runs to 535 residues: MEEGRRGDREGKSAAGWTALSTTKTTLEEKRRLQANGSVGGDAGTSGFRRIVRLFFACMVAGGIQYGWALQLSLLSPYSQTLGISHSYVSLTWICGPIAGFVVQPIVGYYSDRCTMKMGRRRPFILVGCLIICISVMIIGFSADIGRHLGDTKEHCSTYTGPRWSAAMVYIVGFWFLDFANNTVQGPARAMMADLSAGHHGPNVGQSIFSLWMAIGSVLGYLSGANGKWHEWFPWLKTAACCDACANLKGAFFTAVLLIVVSMTVTMYLADEMPLDKQDVDTSGGGGCAVFVDLFKSLRNLPPAMFKVLAVTAVTWLSWFPFIQYNTDWMGREIYHGEPQGTAAKADVYDAGVREGAMGLLFCSVALGVTSFVIPKLCRRLTSKVVWSISNFLVFALMAVMVAVGMVSMRGYRPSLAAGLTGPDPTLKAVALVVFALIGIPQAVLFSVPWAVASEVTAEEGGGQGLAIGVLNIAIVVPQLVIALTAGPIDGAFNKGNTPAFGIGGAFAFICGVLALIWLPKTRGVSNAAVVAGGH.

Residues 1–53 (MEEGRRGDREGKSAAGWTALSTTKTTLEEKRRLQANGSVGGDAGTSGFRRIVR) lie on the Cytoplasmic side of the membrane. A helical transmembrane segment spans residues 54–74 (LFFACMVAGGIQYGWALQLSL). Topologically, residues 75–87 (LSPYSQTLGISHS) are extracellular. Residues 88–108 (YVSLTWICGPIAGFVVQPIVG) traverse the membrane as a helical segment. Topologically, residues 109–122 (YYSDRCTMKMGRRR) are cytoplasmic. The helical transmembrane segment at 123–143 (PFILVGCLIICISVMIIGFSA) threads the bilayer. Topologically, residues 144-163 (DIGRHLGDTKEHCSTYTGPR) are extracellular. A helical transmembrane segment spans residues 164–184 (WSAAMVYIVGFWFLDFANNTV). Topologically, residues 185–203 (QGPARAMMADLSAGHHGPN) are cytoplasmic. The chain crosses the membrane as a helical span at residues 204–224 (VGQSIFSLWMAIGSVLGYLSG). Topologically, residues 225-249 (ANGKWHEWFPWLKTAACCDACANLK) are extracellular. A helical transmembrane segment spans residues 250 to 270 (GAFFTAVLLIVVSMTVTMYLA). At 271–302 (DEMPLDKQDVDTSGGGGCAVFVDLFKSLRNLP) the chain is on the cytoplasmic side. Residues 303–323 (PAMFKVLAVTAVTWLSWFPFI) form a helical membrane-spanning segment. The Extracellular portion of the chain corresponds to 324–354 (QYNTDWMGREIYHGEPQGTAAKADVYDAGVR). Residues 355-375 (EGAMGLLFCSVALGVTSFVIP) traverse the membrane as a helical segment. The Cytoplasmic segment spans residues 376-384 (KLCRRLTSK). The helical transmembrane segment at 385-405 (VVWSISNFLVFALMAVMVAVG) threads the bilayer. Topologically, residues 406 to 429 (MVSMRGYRPSLAAGLTGPDPTLKA) are extracellular. A helical transmembrane segment spans residues 430 to 450 (VALVVFALIGIPQAVLFSVPW). Over 451–465 (AVASEVTAEEGGGQG) the chain is Cytoplasmic. The chain crosses the membrane as a helical span at residues 466–486 (LAIGVLNIAIVVPQLVIALTA). At 487 to 498 (GPIDGAFNKGNT) the chain is on the extracellular side. Residues 499 to 519 (PAFGIGGAFAFICGVLALIWL) form a helical membrane-spanning segment. Residues 520–535 (PKTRGVSNAAVVAGGH) are Cytoplasmic-facing.

Belongs to the glycoside-pentoside-hexuronide (GPH) cation symporter transporter (TC 2.A.2.4) family. As to quaternary structure, homodimer. As to expression, widely expressed. Highest expression in sink leaves and lowest in germinating seeds.

It is found in the cell membrane. It functions in the pathway glycan biosynthesis; sucrose metabolism. Functionally, responsible for the transport of sucrose into the cell, with the concomitant uptake of protons (symport system). Can also transport other glucosides such as maltose, arbutin, salicin, helicin, alpha-phenylglucoside and beta-phenylglucoside. The chain is Sucrose transport protein SUT5 (SUT5) from Oryza sativa subsp. japonica (Rice).